Consider the following 241-residue polypeptide: Chaperone protein HifB (241 aa).

An N-terminal signal peptide occupies residues 1–27 (MGKTMFKKTLLFFTALFFTALCAFSAN).

Belongs to the periplasmic pilus chaperone family.

It localises to the periplasm. In terms of biological role, mediates assembly of pili by forming soluble multimeric complexes with pili subunits as an intermediate step in the assembly process. This protein is involved in type B pili (HifA) assembly. The chain is Chaperone protein HifB (hifB) from Haemophilus influenzae.